Consider the following 149-residue polypeptide: MRAVVQRVKRASVAVDGNAVGEIDKGLCILLGVANDDTEEDANYLCEKIVNLRIFEDETSKFNLSLKDIDGEVLVVSNFTVMGDARKGRRPNFMFAADKEKAERLYNYFVERLKGLAKKVECGIFQAHMEVEIVNDGPVTILLDSKKVF.

A Gly-cisPro motif, important for rejection of L-amino acids motif is present at residues 137 to 138 (GP).

This sequence belongs to the DTD family. As to quaternary structure, homodimer.

Its subcellular location is the cytoplasm. The catalysed reaction is glycyl-tRNA(Ala) + H2O = tRNA(Ala) + glycine + H(+). The enzyme catalyses a D-aminoacyl-tRNA + H2O = a tRNA + a D-alpha-amino acid + H(+). Its function is as follows. An aminoacyl-tRNA editing enzyme that deacylates mischarged D-aminoacyl-tRNAs. Also deacylates mischarged glycyl-tRNA(Ala), protecting cells against glycine mischarging by AlaRS. Acts via tRNA-based rather than protein-based catalysis; rejects L-amino acids rather than detecting D-amino acids in the active site. By recycling D-aminoacyl-tRNA to D-amino acids and free tRNA molecules, this enzyme counteracts the toxicity associated with the formation of D-aminoacyl-tRNA entities in vivo and helps enforce protein L-homochirality. This chain is D-aminoacyl-tRNA deacylase, found in Caldicellulosiruptor saccharolyticus (strain ATCC 43494 / DSM 8903 / Tp8T 6331).